Here is a 271-residue protein sequence, read N- to C-terminus: Phosphonoacetaldehyde hydrolase (271 aa).

D12 acts as the Nucleophile in catalysis. Residues D12 and A14 each coordinate Mg(2+). The active-site Schiff-base intermediate with substrate is K54. D188 is a binding site for Mg(2+).

This sequence belongs to the HAD-like hydrolase superfamily. PhnX family. Homodimer. Requires Mg(2+) as cofactor.

The catalysed reaction is phosphonoacetaldehyde + H2O = acetaldehyde + phosphate + H(+). Its function is as follows. Involved in phosphonate degradation. In Vibrio cholerae serotype O1 (strain ATCC 39541 / Classical Ogawa 395 / O395), this protein is Phosphonoacetaldehyde hydrolase.